Here is a 283-residue protein sequence, read N- to C-terminus: Nopaline-binding periplasmic protein (283 aa).

An N-terminal signal peptide occupies residues 1–25; it reads MKFFNLNALAAVVTGVLLAAGPTQA. A disulfide bridge links C63 with C70.

Belongs to the bacterial solute-binding protein 3 family.

Its subcellular location is the periplasm. Functionally, component of the nopaline active transport system probably consisting of four subunits: Q, M, P and T. This system is also capable of transporting octopine provided that catabolic functions are induced with nopaline. This chain is Nopaline-binding periplasmic protein (nocT), found in Agrobacterium fabrum (strain C58 / ATCC 33970) (Agrobacterium tumefaciens (strain C58)).